Consider the following 331-residue polypeptide: Ribosomal RNA small subunit methyltransferase H (331 aa).

S-adenosyl-L-methionine-binding positions include 56–58 (GGH), Asp76, Phe100, Asp122, and Gln129.

This sequence belongs to the methyltransferase superfamily. RsmH family.

It localises to the cytoplasm. It carries out the reaction cytidine(1402) in 16S rRNA + S-adenosyl-L-methionine = N(4)-methylcytidine(1402) in 16S rRNA + S-adenosyl-L-homocysteine + H(+). Specifically methylates the N4 position of cytidine in position 1402 (C1402) of 16S rRNA. In Chromohalobacter salexigens (strain ATCC BAA-138 / DSM 3043 / CIP 106854 / NCIMB 13768 / 1H11), this protein is Ribosomal RNA small subunit methyltransferase H.